The following is a 416-amino-acid chain: UDP-N-acetylmuramoylalanine--D-glutamate ligase (416 aa).

104–110 provides a ligand contact to ATP; the sequence is GSNGKST.

The protein belongs to the MurCDEF family.

It is found in the cytoplasm. The catalysed reaction is UDP-N-acetyl-alpha-D-muramoyl-L-alanine + D-glutamate + ATP = UDP-N-acetyl-alpha-D-muramoyl-L-alanyl-D-glutamate + ADP + phosphate + H(+). Its pathway is cell wall biogenesis; peptidoglycan biosynthesis. Its function is as follows. Cell wall formation. Catalyzes the addition of glutamate to the nucleotide precursor UDP-N-acetylmuramoyl-L-alanine (UMA). The protein is UDP-N-acetylmuramoylalanine--D-glutamate ligase of Francisella tularensis subsp. tularensis (strain WY96-3418).